The following is a 227-amino-acid chain: Cytochrome c oxidase subunit 2 (227 aa).

Residues 1–14 lie on the Mitochondrial intermembrane side of the membrane; sequence MAHAAQVGLQDATS. Residues 15 to 45 form a helical membrane-spanning segment; that stretch reads PIMEELIIFHDHALMIIFLICFLVLYALFLT. The Mitochondrial matrix segment spans residues 46 to 59; sequence LTTKLTSTNISDAQ. The helical transmembrane segment at 60–87 threads the bilayer; that stretch reads EMETVWTILPAIILVLIALPSLRILYMT. Over 88 to 227 the chain is Mitochondrial intermembrane; the sequence is DEINDPSFTI…IFEMGPVFTL (140 aa). Residues His-161, Cys-196, Glu-198, Cys-200, His-204, and Met-207 each coordinate Cu cation. Glu-198 serves as a coordination point for Mg(2+).

The protein belongs to the cytochrome c oxidase subunit 2 family. In terms of assembly, component of the cytochrome c oxidase (complex IV, CIV), a multisubunit enzyme composed of 14 subunits. The complex is composed of a catalytic core of 3 subunits MT-CO1, MT-CO2 and MT-CO3, encoded in the mitochondrial DNA, and 11 supernumerary subunits COX4I, COX5A, COX5B, COX6A, COX6B, COX6C, COX7A, COX7B, COX7C, COX8 and NDUFA4, which are encoded in the nuclear genome. The complex exists as a monomer or a dimer and forms supercomplexes (SCs) in the inner mitochondrial membrane with NADH-ubiquinone oxidoreductase (complex I, CI) and ubiquinol-cytochrome c oxidoreductase (cytochrome b-c1 complex, complex III, CIII), resulting in different assemblies (supercomplex SCI(1)III(2)IV(1) and megacomplex MCI(2)III(2)IV(2)). Found in a complex with TMEM177, COA6, COX18, COX20, SCO1 and SCO2. Interacts with TMEM177 in a COX20-dependent manner. Interacts with COX20. Interacts with COX16. The cofactor is Cu cation.

It localises to the mitochondrion inner membrane. It carries out the reaction 4 Fe(II)-[cytochrome c] + O2 + 8 H(+)(in) = 4 Fe(III)-[cytochrome c] + 2 H2O + 4 H(+)(out). Component of the cytochrome c oxidase, the last enzyme in the mitochondrial electron transport chain which drives oxidative phosphorylation. The respiratory chain contains 3 multisubunit complexes succinate dehydrogenase (complex II, CII), ubiquinol-cytochrome c oxidoreductase (cytochrome b-c1 complex, complex III, CIII) and cytochrome c oxidase (complex IV, CIV), that cooperate to transfer electrons derived from NADH and succinate to molecular oxygen, creating an electrochemical gradient over the inner membrane that drives transmembrane transport and the ATP synthase. Cytochrome c oxidase is the component of the respiratory chain that catalyzes the reduction of oxygen to water. Electrons originating from reduced cytochrome c in the intermembrane space (IMS) are transferred via the dinuclear copper A center (CU(A)) of subunit 2 and heme A of subunit 1 to the active site in subunit 1, a binuclear center (BNC) formed by heme A3 and copper B (CU(B)). The BNC reduces molecular oxygen to 2 water molecules using 4 electrons from cytochrome c in the IMS and 4 protons from the mitochondrial matrix. This is Cytochrome c oxidase subunit 2 (MT-CO2) from Gorilla gorilla beringei (Mountain gorilla).